A 340-amino-acid polypeptide reads, in one-letter code: DnaJ homolog subfamily B member 1 (340 aa).

A J domain is found at 2-70; sequence GKDYYQTLGL…REIFDRYGEE (69 aa). Position 307 is a phosphothreonine (T307).

As to quaternary structure, interacts with DNAJC3. Interacts with HSF1 (via transactivation domain); this interaction results in the inhibition of heat shock- and HSF1-induced transcriptional activity during the attenuation and recovery phase period of the heat shock response. Interacts with BAG3.

It localises to the cytoplasm. The protein resides in the nucleus. It is found in the nucleolus. Its function is as follows. Interacts with HSP70 and can stimulate its ATPase activity. Stimulates the association between HSC70 and HIP. Negatively regulates heat shock-induced HSF1 transcriptional activity during the attenuation and recovery phase period of the heat shock response. Stimulates ATP hydrolysis and the folding of unfolded proteins mediated by HSPA1A/B (in vitro). This Mus musculus (Mouse) protein is DnaJ homolog subfamily B member 1 (Dnajb1).